We begin with the raw amino-acid sequence, 89 residues long: ATP synthase subunit c, sodium ion specific (89 aa).

2 helical membrane-spanning segments follow: residues 9-29 and 68-88; these read VVLA…IGPG and GIYS…VGLL.

This sequence belongs to the ATPase C chain family. F-type ATPases have 2 components, F(1) - the catalytic core - and F(0) - the membrane sodium channel. F(1) has five subunits: alpha(3), beta(3), gamma(1), delta(1), epsilon(1). F(0) has three main subunits: a(1), b(2) and c(10-14). The alpha and beta chains form an alternating ring which encloses part of the gamma chain. F(1) is attached to F(0) by a central stalk formed by the gamma and epsilon chains, while a peripheral stalk is formed by the delta and b chains.

It is found in the cell membrane. Its function is as follows. F(1)F(0) ATP synthase produces ATP from ADP in the presence of a proton or sodium gradient. F-type ATPases consist of two structural domains, F(1) containing the extramembraneous catalytic core and F(0) containing the membrane sodium channel, linked together by a central stalk and a peripheral stalk. During catalysis, ATP synthesis in the catalytic domain of F(1) is coupled via a rotary mechanism of the central stalk subunits to sodium translocation. Functionally, key component of the F(0) channel; it plays a direct role in translocation across the membrane. A homomeric c-ring of between 10-14 subunits forms the central stalk rotor element with the F(1) delta and epsilon subunits. The protein is ATP synthase subunit c, sodium ion specific (atpE) of Propionigenium modestum.